The sequence spans 109 residues: Large ribosomal subunit protein uL24 (109 aa).

The protein belongs to the universal ribosomal protein uL24 family. Part of the 50S ribosomal subunit.

In terms of biological role, one of two assembly initiator proteins, it binds directly to the 5'-end of the 23S rRNA, where it nucleates assembly of the 50S subunit. Its function is as follows. One of the proteins that surrounds the polypeptide exit tunnel on the outside of the subunit. The protein is Large ribosomal subunit protein uL24 of Rickettsia africae (strain ESF-5).